The chain runs to 182 residues: Translation initiation factor IF-3 (182 aa).

Belongs to the IF-3 family. Monomer.

It is found in the cytoplasm. Functionally, IF-3 binds to the 30S ribosomal subunit and shifts the equilibrium between 70S ribosomes and their 50S and 30S subunits in favor of the free subunits, thus enhancing the availability of 30S subunits on which protein synthesis initiation begins. The chain is Translation initiation factor IF-3 from Thermosynechococcus vestitus (strain NIES-2133 / IAM M-273 / BP-1).